A 51-amino-acid chain; its full sequence is MSSHKTFKIKRFLAKKQKQNRPIPQWIRMKTGNKIRYNSKRRHWRRTKLGL.

It belongs to the eukaryotic ribosomal protein eL39 family. Interacts with IMPACT.

This chain is Large ribosomal subunit protein eL39 (RPL39), found in Gallus gallus (Chicken).